The primary structure comprises 447 residues: Argininosuccinate synthase (447 aa).

ATP is bound by residues 17 to 25 (AFSGGLDTS) and Ala-43. Residue Tyr-99 coordinates L-citrulline. Positions 129 and 131 each coordinate ATP. 3 residues coordinate L-aspartate: Thr-131, Asn-135, and Asp-136. Residue Asn-135 coordinates L-citrulline. ATP is bound at residue Asp-136. 2 residues coordinate L-citrulline: Arg-139 and Ser-192. Residue Asp-194 participates in ATP binding. Residues Thr-201, Glu-203, and Glu-280 each contribute to the L-citrulline site.

The protein belongs to the argininosuccinate synthase family. Type 2 subfamily. As to quaternary structure, homotetramer.

Its subcellular location is the cytoplasm. The catalysed reaction is L-citrulline + L-aspartate + ATP = 2-(N(omega)-L-arginino)succinate + AMP + diphosphate + H(+). It participates in amino-acid biosynthesis; L-arginine biosynthesis; L-arginine from L-ornithine and carbamoyl phosphate: step 2/3. This chain is Argininosuccinate synthase, found in Escherichia coli O139:H28 (strain E24377A / ETEC).